The following is a 396-amino-acid chain: S-adenosylmethionine synthase (396 aa).

An ATP-binding site is contributed by H16. D18 serves as a coordination point for Mg(2+). A K(+)-binding site is contributed by E44. The L-methionine site is built by E57 and Q100. The tract at residues 100–110 (QSPDIAQGVDR) is flexible loop. Residues 167-169 (DAK), 233-234 (RF), D242, 248-249 (RK), A265, and K269 each bind ATP. D242 is a binding site for L-methionine. K273 contacts L-methionine.

Belongs to the AdoMet synthase family. Homotetramer; dimer of dimers. The cofactor is Mg(2+). K(+) is required as a cofactor.

Its subcellular location is the cytoplasm. The catalysed reaction is L-methionine + ATP + H2O = S-adenosyl-L-methionine + phosphate + diphosphate. The protein operates within amino-acid biosynthesis; S-adenosyl-L-methionine biosynthesis; S-adenosyl-L-methionine from L-methionine: step 1/1. In terms of biological role, catalyzes the formation of S-adenosylmethionine (AdoMet) from methionine and ATP. The overall synthetic reaction is composed of two sequential steps, AdoMet formation and the subsequent tripolyphosphate hydrolysis which occurs prior to release of AdoMet from the enzyme. This is S-adenosylmethionine synthase from Paraburkholderia phytofirmans (strain DSM 17436 / LMG 22146 / PsJN) (Burkholderia phytofirmans).